Here is a 256-residue protein sequence, read N- to C-terminus: Thiazole synthase (256 aa).

Lysine 95 functions as the Schiff-base intermediate with DXP in the catalytic mechanism. Residues glycine 156, 182–183 (AG), and 204–205 (NT) contribute to the 1-deoxy-D-xylulose 5-phosphate site.

It belongs to the ThiG family. In terms of assembly, homotetramer. Forms heterodimers with either ThiH or ThiS.

The protein localises to the cytoplasm. It catalyses the reaction [ThiS sulfur-carrier protein]-C-terminal-Gly-aminoethanethioate + 2-iminoacetate + 1-deoxy-D-xylulose 5-phosphate = [ThiS sulfur-carrier protein]-C-terminal Gly-Gly + 2-[(2R,5Z)-2-carboxy-4-methylthiazol-5(2H)-ylidene]ethyl phosphate + 2 H2O + H(+). It participates in cofactor biosynthesis; thiamine diphosphate biosynthesis. Its function is as follows. Catalyzes the rearrangement of 1-deoxy-D-xylulose 5-phosphate (DXP) to produce the thiazole phosphate moiety of thiamine. Sulfur is provided by the thiocarboxylate moiety of the carrier protein ThiS. In vitro, sulfur can be provided by H(2)S. The chain is Thiazole synthase from Salmonella paratyphi B (strain ATCC BAA-1250 / SPB7).